The primary structure comprises 296 residues: Peptide transport system permease protein SapC (296 aa).

Over 1-28 the chain is Cytoplasmic; the sequence is MPYDSVYSEKRPPGTLRTAWRKFYSDAS. The chain crosses the membrane as a helical span at residues 29 to 49; the sequence is AMVGLYGCAGLAVLCIFGGWF. At 50 to 98 the chain is on the periplasmic side; sequence APYGIDQQFLGYQLLPPSWSRYGEVSFFLGTDDLGRDVLSRLLSGAAPT. A helical membrane pass occupies residues 99 to 119; the sequence is VGGAFVVTLAATICGLVLGTF. Positions 99–284 constitute an ABC transmembrane type-1 domain; it reads VGGAFVVTLA…ISVLLVNLLG (186 aa). Residues 120 to 133 lie on the Cytoplasmic side of the membrane; that stretch reads AGATHGLRSAVLNH. Residues 134–154 traverse the membrane as a helical segment; sequence ILDTLLAIPSLLLAIIVVAFA. The Periplasmic segment spans residues 155 to 196; the sequence is GPSLSHAMFAVWLALLPRMVRSIYSMVHDELEKEYVIAARLD. A helical membrane pass occupies residues 197 to 217; the sequence is GASTLNILWFAVMPNITAGLV. Over 218–222 the chain is Cytoplasmic; sequence TEITR. A helical membrane pass occupies residues 223–243; that stretch reads ALSMAILDIAALGFLDLGAQL. Over 244–257 the chain is Periplasmic; sequence PSPEWGAMLGDALE. Residues 258 to 278 traverse the membrane as a helical segment; that stretch reads LIYVAPWTVMLPGAAIMISVL. Over 279-296 the chain is Cytoplasmic; that stretch reads LVNLLGDGVRRAIIAGVE.

Belongs to the binding-protein-dependent transport system permease family. OppBC subfamily.

The protein resides in the cell inner membrane. Functionally, involved in a peptide intake transport system that plays a role in the resistance to antimicrobial peptides. The polypeptide is Peptide transport system permease protein SapC (sapC) (Escherichia coli O6:H1 (strain CFT073 / ATCC 700928 / UPEC)).